The chain runs to 361 residues: D-amino-acid oxidase (361 aa).

Residues 1–22 form the signal peptide; sequence MSNTIVVVGAGVIGLTSALLLS. Residues Ala-10, Ile-13, Lys-34, His-35, Ala-45, Ser-46, Gly-50, and Asn-52 each coordinate FAD. Asn-193 and Asn-222 each carry an N-linked (GlcNAc...) asparagine glycan. Residues Tyr-242, Tyr-258, and Arg-305 each contribute to the (R)-lactate site. Anthranilate contacts are provided by Tyr-242, Tyr-258, and Arg-305. 5 residues coordinate FAD: Arg-305, Ser-332, Gly-335, Tyr-336, and Gln-337. Positions 359–361 match the Microbody targeting signal motif; sequence SKL.

The protein belongs to the DAMOX/DASOX family. It depends on FAD as a cofactor. The N-terminus is blocked.

The protein resides in the peroxisome matrix. It carries out the reaction a D-alpha-amino acid + O2 + H2O = a 2-oxocarboxylate + H2O2 + NH4(+). In terms of biological role, catalyzes the oxidative deamination of D-amino acids with broad substrate specificity. Enables the organism to utilize D-amino acids as a source of nutrients. This Fusarium vanettenii (Neocosmospora pisi) protein is D-amino-acid oxidase.